Reading from the N-terminus, the 236-residue chain is 15,16-dihydrobiliverdin:ferredoxin oxidoreductase (236 aa).

It belongs to the HY2 family.

The enzyme catalyses 15,16-dihydrobiliverdin + oxidized 2[4Fe-4S]-[ferredoxin] = biliverdin IXalpha + reduced 2[4Fe-4S]-[ferredoxin] + 2 H(+). Catalyzes the two-electron reduction of biliverdin IX-alpha at the C15 methine bridge. The protein is 15,16-dihydrobiliverdin:ferredoxin oxidoreductase of Prochlorococcus marinus (strain MIT 9515).